A 20-amino-acid polypeptide reads, in one-letter code: Collagenolytic protease 35 kDa 2 (20 aa).

Residues 1 to 20 (IVGGTEVTPGEIPYQLSFQD) enclose the Peptidase S1 domain. The tract at residues 1 to 20 (IVGGTEVTPGEIPYQLSFQD) is disordered.

Belongs to the peptidase S1 family.

The catalysed reaction is Hydrolysis of proteins, with broad specificity for peptide bonds. Native collagen is cleaved about 75% of the length of the molecule from the N-terminus. Low activity on small molecule substrates of both trypsin and chymotrypsin.. This enzyme is a serine protease capable of degrading the native triple helix of collagen. The sequence is that of Collagenolytic protease 35 kDa 2 from Chionoecetes opilio (Atlantic snow crab).